The chain runs to 101 residues: Small ribosomal subunit protein uS14 (101 aa).

Belongs to the universal ribosomal protein uS14 family. As to quaternary structure, part of the 30S ribosomal subunit. Contacts proteins S3 and S10.

Binds 16S rRNA, required for the assembly of 30S particles and may also be responsible for determining the conformation of the 16S rRNA at the A site. This is Small ribosomal subunit protein uS14 from Francisella tularensis subsp. holarctica (strain FTNF002-00 / FTA).